A 121-amino-acid chain; its full sequence is Large ribosomal subunit protein bL21c (121 aa).

It belongs to the bacterial ribosomal protein bL21 family. As to quaternary structure, part of the 50S ribosomal subunit.

It localises to the plastid. The protein resides in the chloroplast. Functionally, this protein binds to 23S rRNA. The polypeptide is Large ribosomal subunit protein bL21c (Chaetosphaeridium globosum (Charophycean green alga)).